The primary structure comprises 112 residues: uncharacterized protein (112 aa).

The segment at 90-112 (KNFNNSKNDQIKKKKIDNNQVNL) is disordered.

This is an uncharacterized protein from Buchnera aphidicola subsp. Acyrthosiphon pisum (strain APS) (Acyrthosiphon pisum symbiotic bacterium).